The chain runs to 110 residues: Dermcidin (110 aa).

Residues 1–19 (MRFMTLLFLTALAGALVCA) form the signal peptide. The disordered stretch occupies residues 24–70 (AASAPGSGNPCHEASAAQKENAGEDPGLARQAPKPRKQRSSLLEKGL). Ser30 and Ser38 each carry an O-linked (Xyl...) (chondroitin sulfate) serine glycan. Positions 50-62 (GLARQAPKPRKQR) are excised as a propeptide. The chain crosses the membrane as a helical span at residues 64-108 (SLLEKGLDGAKKAVGGLGKLGKDAVEDLESVGKGAVHDVKDVLDS). Glu67 contributes to the Zn(2+) binding site. Lys68 is modified (N6-acetyllysine). Residues Asp71, Asp86, Asp90, His100, and Asp104 each contribute to the Zn(2+) site. A propeptide is located at residue Leu110.

As to quaternary structure, homohexamer. Mn(2+) serves as cofactor. The cofactor is Zn(2+). As to expression, detected in urine (at protein level). Constitutively expressed in eccrine sweat gland cells (at protein level). Secreted into the sweat at a concentration of 1-10 micrograms/ml.

The protein resides in the secreted. It localises to the membrane. Functionally, found in sweat, has an antimicrobial activity during early bacterial colonization. The secreted peptide assembles into homohexameric complexes that can associate with and also insert into pathogen membranes. Once inserted in bacteria membranes forms anion channels probably altering the transmembrane potential essential for bacterial survival. Highly effective against E.coli, E.faecalis, S.aureus and C.albicans. Optimal pH and salt concentration resemble the conditions in sweat. Also exhibits proteolytic activity, cleaving on the C-terminal side of Arg and, to a lesser extent, Lys residues. Its function is as follows. Promotes survival of neurons and displays phosphatase activity. It may bind IgG. The polypeptide is Dermcidin (Homo sapiens (Human)).